Here is a 295-residue protein sequence, read N- to C-terminus: Bifunctional protein FolD (295 aa).

NADP(+) contacts are provided by residues 166–168, Thr195, and Val236; that span reads GRS.

The protein belongs to the tetrahydrofolate dehydrogenase/cyclohydrolase family. In terms of assembly, homodimer.

It carries out the reaction (6R)-5,10-methylene-5,6,7,8-tetrahydrofolate + NADP(+) = (6R)-5,10-methenyltetrahydrofolate + NADPH. The enzyme catalyses (6R)-5,10-methenyltetrahydrofolate + H2O = (6R)-10-formyltetrahydrofolate + H(+). Its pathway is one-carbon metabolism; tetrahydrofolate interconversion. Its function is as follows. Catalyzes the oxidation of 5,10-methylenetetrahydrofolate to 5,10-methenyltetrahydrofolate and then the hydrolysis of 5,10-methenyltetrahydrofolate to 10-formyltetrahydrofolate. The chain is Bifunctional protein FolD from Syntrophobacter fumaroxidans (strain DSM 10017 / MPOB).